Here is a 198-residue protein sequence, read N- to C-terminus: Holliday junction branch migration complex subunit RuvA (198 aa).

Positions M1 to H63 are domain I. The interval T64–K142 is domain II. The tract at residues A143–K147 is flexible linker. The interval A148–G198 is domain III.

The protein belongs to the RuvA family. Homotetramer. Forms an RuvA(8)-RuvB(12)-Holliday junction (HJ) complex. HJ DNA is sandwiched between 2 RuvA tetramers; dsDNA enters through RuvA and exits via RuvB. An RuvB hexamer assembles on each DNA strand where it exits the tetramer. Each RuvB hexamer is contacted by two RuvA subunits (via domain III) on 2 adjacent RuvB subunits; this complex drives branch migration. In the full resolvosome a probable DNA-RuvA(4)-RuvB(12)-RuvC(2) complex forms which resolves the HJ.

The protein localises to the cytoplasm. Its function is as follows. The RuvA-RuvB-RuvC complex processes Holliday junction (HJ) DNA during genetic recombination and DNA repair, while the RuvA-RuvB complex plays an important role in the rescue of blocked DNA replication forks via replication fork reversal (RFR). RuvA specifically binds to HJ cruciform DNA, conferring on it an open structure. The RuvB hexamer acts as an ATP-dependent pump, pulling dsDNA into and through the RuvAB complex. HJ branch migration allows RuvC to scan DNA until it finds its consensus sequence, where it cleaves and resolves the cruciform DNA. This is Holliday junction branch migration complex subunit RuvA from Streptococcus pyogenes serotype M49 (strain NZ131).